A 514-amino-acid polypeptide reads, in one-letter code: Inosine-5'-monophosphate dehydrogenase (514 aa).

CBS domains follow at residues 112–171 (FISK…DTPV) and 175–233 (MTRR…PHST). Residues 270–272 (DSS) and 320–322 (GMG) each bind NAD(+). Glycine 322 and glycine 324 together coordinate K(+). IMP is bound at residue serine 325. Position 327 (cysteine 327) interacts with K(+). Cysteine 327 functions as the Thioimidate intermediate in the catalytic mechanism. Residues 360 to 362 (DGG), 383 to 384 (GG), and 407 to 411 (YRGMG) each bind IMP. Arginine 425 functions as the Proton acceptor in the catalytic mechanism. An IMP-binding site is contributed by glutamine 437. K(+)-binding residues include glutamate 496, glycine 497, and glycine 498. The Microbody targeting signal motif lies at 512 to 514 (AKM).

This sequence belongs to the IMPDH/GMPR family. As to quaternary structure, heterotetramer. Interacts with glycosomal protein sorting receptor PEX5. K(+) serves as cofactor.

It is found in the glycosome. It carries out the reaction IMP + NAD(+) + H2O = XMP + NADH + H(+). The protein operates within purine metabolism; XMP biosynthesis via de novo pathway; XMP from IMP: step 1/1. With respect to regulation, mycophenolic acid (MPA) is a non-competitive inhibitor that prevents formation of the closed enzyme conformation by binding to the same site as the amobile flap. In contrast, mizoribine monophosphate (MZP) is a competitive inhibitor that induces the closed conformation. MPA is a potent inhibitor of mammalian IMPDHs but a poor inhibitor of the bacterial enzymes. MZP is a more potent inhibitor of bacterial IMPDH. Potently inhibited by MPA. Inhibited by XMP and GMP. In terms of biological role, catalyzes the conversion of inosine 5'-phosphate (IMP) to xanthosine 5'-phosphate (XMP), the first committed and rate-limiting step in the de novo synthesis of guanine nucleotides, and therefore plays an important role in the regulation of cell growth. This Leishmania donovani protein is Inosine-5'-monophosphate dehydrogenase.